The primary structure comprises 87 residues: Small ribosomal subunit protein bS20 (87 aa).

Belongs to the bacterial ribosomal protein bS20 family.

Functionally, binds directly to 16S ribosomal RNA. The polypeptide is Small ribosomal subunit protein bS20 (Clostridium botulinum (strain Eklund 17B / Type B)).